The primary structure comprises 156 residues: ATP synthase subunit b (156 aa).

The chain crosses the membrane as a helical span at residues 7–29 (LLGQAISFALFVWFCMKYVWPPL).

The protein belongs to the ATPase B chain family. F-type ATPases have 2 components, F(1) - the catalytic core - and F(0) - the membrane proton channel. F(1) has five subunits: alpha(3), beta(3), gamma(1), delta(1), epsilon(1). F(0) has three main subunits: a(1), b(2) and c(10-14). The alpha and beta chains form an alternating ring which encloses part of the gamma chain. F(1) is attached to F(0) by a central stalk formed by the gamma and epsilon chains, while a peripheral stalk is formed by the delta and b chains.

It localises to the cell inner membrane. Its function is as follows. F(1)F(0) ATP synthase produces ATP from ADP in the presence of a proton or sodium gradient. F-type ATPases consist of two structural domains, F(1) containing the extramembraneous catalytic core and F(0) containing the membrane proton channel, linked together by a central stalk and a peripheral stalk. During catalysis, ATP synthesis in the catalytic domain of F(1) is coupled via a rotary mechanism of the central stalk subunits to proton translocation. In terms of biological role, component of the F(0) channel, it forms part of the peripheral stalk, linking F(1) to F(0). The polypeptide is ATP synthase subunit b (Vibrio parahaemolyticus serotype O3:K6 (strain RIMD 2210633)).